The chain runs to 183 residues: Shikimate kinase (183 aa).

15 to 20 is an ATP binding site; that stretch reads GSGKST. Residue S19 coordinates Mg(2+). Substrate contacts are provided by D37, R61, and G85. R123 contacts ATP. Substrate is bound at residue R142.

Belongs to the shikimate kinase family. In terms of assembly, monomer. Mg(2+) is required as a cofactor.

It localises to the cytoplasm. It carries out the reaction shikimate + ATP = 3-phosphoshikimate + ADP + H(+). Its pathway is metabolic intermediate biosynthesis; chorismate biosynthesis; chorismate from D-erythrose 4-phosphate and phosphoenolpyruvate: step 5/7. In terms of biological role, catalyzes the specific phosphorylation of the 3-hydroxyl group of shikimic acid using ATP as a cosubstrate. This is Shikimate kinase from Paracidovorax citrulli (strain AAC00-1) (Acidovorax citrulli).